Consider the following 285-residue polypeptide: Phosphatidylserine decarboxylase proenzyme (285 aa).

Active-site charge relay system; for autoendoproteolytic cleavage activity residues include aspartate 89, histidine 146, and serine 252. Serine 252 functions as the Schiff-base intermediate with substrate; via pyruvic acid; for decarboxylase activity in the catalytic mechanism. Serine 252 is modified (pyruvic acid (Ser); by autocatalysis).

The protein belongs to the phosphatidylserine decarboxylase family. PSD-B subfamily. Prokaryotic type I sub-subfamily. In terms of assembly, heterodimer of a large membrane-associated beta subunit and a small pyruvoyl-containing alpha subunit. Pyruvate serves as cofactor. Post-translationally, is synthesized initially as an inactive proenzyme. Formation of the active enzyme involves a self-maturation process in which the active site pyruvoyl group is generated from an internal serine residue via an autocatalytic post-translational modification. Two non-identical subunits are generated from the proenzyme in this reaction, and the pyruvate is formed at the N-terminus of the alpha chain, which is derived from the carboxyl end of the proenzyme. The autoendoproteolytic cleavage occurs by a canonical serine protease mechanism, in which the side chain hydroxyl group of the serine supplies its oxygen atom to form the C-terminus of the beta chain, while the remainder of the serine residue undergoes an oxidative deamination to produce ammonia and the pyruvoyl prosthetic group on the alpha chain. During this reaction, the Ser that is part of the protease active site of the proenzyme becomes the pyruvoyl prosthetic group, which constitutes an essential element of the active site of the mature decarboxylase.

Its subcellular location is the cell membrane. It catalyses the reaction a 1,2-diacyl-sn-glycero-3-phospho-L-serine + H(+) = a 1,2-diacyl-sn-glycero-3-phosphoethanolamine + CO2. The protein operates within phospholipid metabolism; phosphatidylethanolamine biosynthesis; phosphatidylethanolamine from CDP-diacylglycerol: step 2/2. In terms of biological role, catalyzes the formation of phosphatidylethanolamine (PtdEtn) from phosphatidylserine (PtdSer). This chain is Phosphatidylserine decarboxylase proenzyme, found in Vibrio parahaemolyticus serotype O3:K6 (strain RIMD 2210633).